An 895-amino-acid chain; its full sequence is Alanine--tRNA ligase (895 aa).

The Zn(2+) site is built by H586, H590, C690, and H694.

It belongs to the class-II aminoacyl-tRNA synthetase family. Zn(2+) serves as cofactor.

The protein resides in the cytoplasm. The enzyme catalyses tRNA(Ala) + L-alanine + ATP = L-alanyl-tRNA(Ala) + AMP + diphosphate. Functionally, catalyzes the attachment of alanine to tRNA(Ala) in a two-step reaction: alanine is first activated by ATP to form Ala-AMP and then transferred to the acceptor end of tRNA(Ala). Also edits incorrectly charged Ser-tRNA(Ala) and Gly-tRNA(Ala) via its editing domain. This is Alanine--tRNA ligase from Korarchaeum cryptofilum (strain OPF8).